The sequence spans 296 residues: NAD kinase (296 aa).

Asp72 functions as the Proton acceptor in the catalytic mechanism. NAD(+) is bound by residues 72-73 (DG), 146-147 (ND), Arg157, Lys174, Asp176, 187-192 (TAYALS), and Gln247.

It belongs to the NAD kinase family. It depends on a divalent metal cation as a cofactor.

The protein resides in the cytoplasm. It catalyses the reaction NAD(+) + ATP = ADP + NADP(+) + H(+). Functionally, involved in the regulation of the intracellular balance of NAD and NADP, and is a key enzyme in the biosynthesis of NADP. Catalyzes specifically the phosphorylation on 2'-hydroxyl of the adenosine moiety of NAD to yield NADP. In Pseudomonas putida (strain ATCC 700007 / DSM 6899 / JCM 31910 / BCRC 17059 / LMG 24140 / F1), this protein is NAD kinase.